The primary structure comprises 989 residues: Atos homolog protein A (989 aa).

Positions 24-32 (TLLITEGRT) are transactivation domain 1 (TAD1). Disordered stretches follow at residues 244–295 (GEGG…LPPG), 393–477 (PDAL…KPAT), 525–639 (QNEQ…GLTQ), and 656–686 (EAEK…TPAN). Low complexity predominate over residues 254-270 (RSSLRLPRSPLFSRSLH). A compositionally biased stretch (polar residues) spans 397–412 (FTSQEPPGHKTTWNST). 2 stretches are compositionally biased toward basic and acidic residues: residues 413–423 (QDKECLKKSKD) and 460–471 (TRLDRVDRESKT). 2 stretches are compositionally biased toward polar residues: residues 525–544 (QNEQ…VSLS) and 600–638 (TKSQ…NGLT). The segment covering 656-675 (EAEKHVRDGSTCLEKDENQE) has biased composition (basic and acidic residues). Over residues 676–686 (PHSSLSSTPAN) the composition is skewed to polar residues. The required for macropage invasion stretch occupies residues 792-849 (LLGNFEECVLNYRLEPLGTVEGFTAEVGASGTFCPSHMTLPVDVSFYSVSDDNAPSPY). The transactivation domain 2 (TAD2) stretch occupies residues 876–884 (FNPNKTVVK).

The protein belongs to the ATOS family.

It localises to the nucleus. Functionally, transcription regulator that syncronizes transcriptional and translational programs to promote macrophage invasion of tissues. The protein is Atos homolog protein A (atosa) of Danio rerio (Zebrafish).